The sequence spans 475 residues: FAD-dependent monooxygenase janM (475 aa).

Residues 8-24 (VIIVGGSIGGLTLAHCL) traverse the membrane as a helical segment. FAD is bound by residues Glu-35, Gly-49, and Arg-108. Asn-147 carries N-linked (GlcNAc...) asparagine glycosylation. Residues Asp-299 and Ala-312 each contribute to the FAD site. The chain crosses the membrane as a helical span at residues 432-451 (GWRFHAMLCILMLAILYTWV).

Belongs to the paxM FAD-dependent monooxygenase family. FAD serves as cofactor.

It is found in the membrane. It functions in the pathway secondary metabolite biosynthesis. FAD-dependent monooxygenase; part of the gene cluster that mediates the biosynthesis of the indole diterpenes janthitremanes such as shearinine K or shearinine A. The geranylgeranyl diphosphate (GGPP) synthase janG catalyzes the first step in janthitremane biosynthesis via conversion of farnesyl pyrophosphate and isopentyl pyrophosphate into geranylgeranyl pyrophosphate (GGPP). Condensation of indole-3-glycerol phosphate with GGPP by the prenyl transferase janC then forms 3-geranylgeranylindole (3-GGI). Epoxidation by the FAD-dependent monooxygenase janM leads to a epoxidized-GGI that is substrate of the terpene cyclase janB for cyclization to yield paspaline. Paspaline is subsequently converted to 13-desoxypaspaline by the cytochrome P450 monooxygenase janP, via beta-PC-M6 in a series of alpha-face oxidations. The cytochrome P450 monooxygenase janQ is proposed to carry out sequential beta-face oxidation steps at C-7 and C-13 of 13-desoxypaspaline to form paspalicine and paspalinine respectively. The indole diterpene prenyltransferase janD may then convert paspalinine into shearinine K which is substrate of janO and/or additional enzymes for oxidation and cyclization to generate shearinine A. The sequence is that of FAD-dependent monooxygenase janM from Penicillium janthinellum (Penicillium vitale).